We begin with the raw amino-acid sequence, 700 residues long: Polyribonucleotide nucleotidyltransferase (700 aa).

Mg(2+) is bound by residues Asp485 and Asp491. In terms of domain architecture, KH spans 552–611; that stretch reads PRITVIKINPEKIRDVIGKGGAVIRALTEETGTTIELEDDGTVKIASSNGEATKEAIRRI. Residues 621–689 form the S1 motif domain; the sequence is GRIYNGKVIR…RQGRVRLSIK (69 aa).

The protein belongs to the polyribonucleotide nucleotidyltransferase family. In terms of assembly, component of the RNA degradosome, which is a multiprotein complex involved in RNA processing and mRNA degradation. It depends on Mg(2+) as a cofactor.

The protein resides in the cytoplasm. It catalyses the reaction RNA(n+1) + phosphate = RNA(n) + a ribonucleoside 5'-diphosphate. Its function is as follows. Involved in mRNA degradation. Catalyzes the phosphorolysis of single-stranded polyribonucleotides processively in the 3'- to 5'-direction. The protein is Polyribonucleotide nucleotidyltransferase of Shewanella baltica (strain OS155 / ATCC BAA-1091).